The primary structure comprises 78 residues: DNA-directed RNA polymerase subunit Rpo5 (78 aa).

Belongs to the archaeal Rpo5/eukaryotic RPB5 RNA polymerase subunit family. In terms of assembly, part of the RNA polymerase complex.

The protein resides in the cytoplasm. The enzyme catalyses RNA(n) + a ribonucleoside 5'-triphosphate = RNA(n+1) + diphosphate. DNA-dependent RNA polymerase (RNAP) catalyzes the transcription of DNA into RNA using the four ribonucleoside triphosphates as substrates. The chain is DNA-directed RNA polymerase subunit Rpo5 from Methanocaldococcus jannaschii (strain ATCC 43067 / DSM 2661 / JAL-1 / JCM 10045 / NBRC 100440) (Methanococcus jannaschii).